The following is a 157-amino-acid chain: Probable intracellular pathogenesis-related protein T1 (157 aa).

2 N-linked (GlcNAc...) asparagine glycosylation sites follow: asparagine 79 and asparagine 117.

It belongs to the BetVI family.

The sequence is that of Probable intracellular pathogenesis-related protein T1 (PCKR3) from Catharanthus roseus (Madagascar periwinkle).